Reading from the N-terminus, the 91-residue chain is Ribonuclease P protein component 4 (91 aa).

Residues cysteine 55, cysteine 58, cysteine 78, and cysteine 81 each contribute to the Zn(2+) site.

Belongs to the eukaryotic/archaeal RNase P protein component 4 family. Consists of a catalytic RNA component and at least 4-5 protein subunits. Zn(2+) is required as a cofactor.

Its subcellular location is the cytoplasm. The catalysed reaction is Endonucleolytic cleavage of RNA, removing 5'-extranucleotides from tRNA precursor.. Its function is as follows. Part of ribonuclease P, a protein complex that generates mature tRNA molecules by cleaving their 5'-ends. This is Ribonuclease P protein component 4 from Thermoplasma acidophilum (strain ATCC 25905 / DSM 1728 / JCM 9062 / NBRC 15155 / AMRC-C165).